The following is a 1390-amino-acid chain: DNA-directed RNA polymerase subunit beta (1390 aa).

Belongs to the RNA polymerase beta chain family. In terms of assembly, the RNAP catalytic core consists of 2 alpha, 1 beta, 1 beta' and 1 omega subunit. When a sigma factor is associated with the core the holoenzyme is formed, which can initiate transcription.

It carries out the reaction RNA(n) + a ribonucleoside 5'-triphosphate = RNA(n+1) + diphosphate. Its function is as follows. DNA-dependent RNA polymerase catalyzes the transcription of DNA into RNA using the four ribonucleoside triphosphates as substrates. In Chromobacterium violaceum (strain ATCC 12472 / DSM 30191 / JCM 1249 / CCUG 213 / NBRC 12614 / NCIMB 9131 / NCTC 9757 / MK), this protein is DNA-directed RNA polymerase subunit beta.